The following is a 144-amino-acid chain: Transcriptional regulator SlyA (144 aa).

Residues 2-135 (ESSLGSDLAR…LNNIIAKLER (134 aa)) form the HTH marR-type domain. The segment at residues 49–72 (QIQLAKAIGIEQPSLVRTLDQLES) is a DNA-binding region (H-T-H motif).

It belongs to the SlyA family. Homodimer.

Functionally, transcription regulator that can specifically activate or repress expression of target genes. This is Transcriptional regulator SlyA from Blochmanniella floridana.